The following is a 103-amino-acid chain: Phosphoribosyl-ATP pyrophosphatase (103 aa).

The protein belongs to the PRA-PH family.

Its subcellular location is the cytoplasm. The catalysed reaction is 1-(5-phospho-beta-D-ribosyl)-ATP + H2O = 1-(5-phospho-beta-D-ribosyl)-5'-AMP + diphosphate + H(+). It participates in amino-acid biosynthesis; L-histidine biosynthesis; L-histidine from 5-phospho-alpha-D-ribose 1-diphosphate: step 2/9. This Cereibacter sphaeroides (strain ATCC 17029 / ATH 2.4.9) (Rhodobacter sphaeroides) protein is Phosphoribosyl-ATP pyrophosphatase.